The following is a 2171-amino-acid chain: DExH-box ATP-dependent RNA helicase DExH12 (2171 aa).

3 disordered regions span residues Ser24–Asp80, Glu218–Thr267, and Thr383–Trp426. Composition is skewed to basic and acidic residues over residues Asn31–Thr40 and Ile50–Asp80. Residues Glu218–Glu242 show a composition bias toward acidic residues. A compositionally biased stretch (basic and acidic residues) spans Thr383 to Glu423. The 184-residue stretch at Asp514–Leu697 folds into the Helicase ATP-binding 1 domain. Residue Ala527–Thr534 coordinates ATP. Positions Asp639 to His642 match the DEIH box motif. The Helicase C-terminal 1 domain occupies Leu731 to Cys941. Positions Thr1006–Val1308 constitute an SEC63 1 domain. A Helicase ATP-binding 2 domain is found at Thr1360 to Phe1537. Ala1373–Thr1380 contributes to the ATP binding site. The short motif at Asp1479–His1482 is the DELH box element. In terms of domain architecture, Helicase C-terminal 2 spans Ala1574–Val1779. Positions Pro1839–Ser2157 constitute an SEC63 2 domain.

The protein belongs to the DExH box helicase family. Interacts with CLO.

The protein resides in the nucleus. It catalyses the reaction ATP + H2O = ADP + phosphate + H(+). Functionally, RNA helicase that plays an essential role in pre-mRNA splicing as component of the U5 snRNP and U4/U6-U5 tri-snRNP complexes. Involved in spliceosome assembly, activation and disassembly. In Arabidopsis thaliana (Mouse-ear cress), this protein is DExH-box ATP-dependent RNA helicase DExH12.